An 880-amino-acid chain; its full sequence is Translation initiation factor IF-2 (880 aa).

3 disordered regions span residues 51–78, 93–116, and 142–293; these read KQHGGESKTKMTLQRKTKSTLNVKGSTG, YVKRSDSETQETQAAELADQQAAN, and KEAD…FEKP. The segment covering 69–78 has biased composition (polar residues); the sequence is STLNVKGSTG. Residues 142 to 229 are compositionally biased toward basic and acidic residues; it reads KEADEKAKKA…ARKKAAEGGD (88 aa). Over residues 269 to 279 the composition is skewed to basic residues; sequence GRRTRRGKKQR. The tr-type G domain occupies 380–549; it reads SRAPVVTIMG…LLQAEMLDLS (170 aa). A G1 region spans residues 389–396; it reads GHVDHGKT. 389-396 is a binding site for GTP; that stretch reads GHVDHGKT. The tract at residues 414 to 418 is G2; that stretch reads GITQH. Positions 435–438 are G3; the sequence is DTPG. GTP-binding positions include 435-439 and 489-492; these read DTPGH and NKID. The G4 stretch occupies residues 489 to 492; the sequence is NKID. The tract at residues 525–527 is G5; sequence SAK.

Belongs to the TRAFAC class translation factor GTPase superfamily. Classic translation factor GTPase family. IF-2 subfamily.

The protein localises to the cytoplasm. In terms of biological role, one of the essential components for the initiation of protein synthesis. Protects formylmethionyl-tRNA from spontaneous hydrolysis and promotes its binding to the 30S ribosomal subunits. Also involved in the hydrolysis of GTP during the formation of the 70S ribosomal complex. The protein is Translation initiation factor IF-2 of Psychromonas ingrahamii (strain DSM 17664 / CCUG 51855 / 37).